The primary structure comprises 158 residues: 6,7-dimethyl-8-ribityllumazine synthase (158 aa).

5-amino-6-(D-ribitylamino)uracil contacts are provided by residues Phe-23, 61-63 (SFE), and 85-87 (AVI). Residue 90-91 (ET) participates in (2S)-2-hydroxy-3-oxobutyl phosphate binding. His-93 serves as the catalytic Proton donor. Phe-118 provides a ligand contact to 5-amino-6-(D-ribitylamino)uracil. Arg-132 contacts (2S)-2-hydroxy-3-oxobutyl phosphate.

This sequence belongs to the DMRL synthase family.

The catalysed reaction is (2S)-2-hydroxy-3-oxobutyl phosphate + 5-amino-6-(D-ribitylamino)uracil = 6,7-dimethyl-8-(1-D-ribityl)lumazine + phosphate + 2 H2O + H(+). Its pathway is cofactor biosynthesis; riboflavin biosynthesis; riboflavin from 2-hydroxy-3-oxobutyl phosphate and 5-amino-6-(D-ribitylamino)uracil: step 1/2. In terms of biological role, catalyzes the formation of 6,7-dimethyl-8-ribityllumazine by condensation of 5-amino-6-(D-ribitylamino)uracil with 3,4-dihydroxy-2-butanone 4-phosphate. This is the penultimate step in the biosynthesis of riboflavin. The chain is 6,7-dimethyl-8-ribityllumazine synthase from Prochlorococcus marinus subsp. pastoris (strain CCMP1986 / NIES-2087 / MED4).